The following is a 1269-amino-acid chain: DNA-directed RNA polymerase subunit beta (1269 aa).

It belongs to the RNA polymerase beta chain family. As to quaternary structure, the RNAP catalytic core consists of 2 alpha, 1 beta, 1 beta' and 1 omega subunit. When a sigma factor is associated with the core the holoenzyme is formed, which can initiate transcription.

It catalyses the reaction RNA(n) + a ribonucleoside 5'-triphosphate = RNA(n+1) + diphosphate. Functionally, DNA-dependent RNA polymerase catalyzes the transcription of DNA into RNA using the four ribonucleoside triphosphates as substrates. The polypeptide is DNA-directed RNA polymerase subunit beta (Porphyromonas gingivalis (strain ATCC BAA-308 / W83)).